The sequence spans 292 residues: Shikimate dehydrogenase (NADP(+)) (292 aa).

Shikimate-binding positions include 22 to 24 and S69; that span reads SLS. K73 (proton acceptor) is an active-site residue. Residues N94 and D111 each coordinate shikimate. NADP(+)-binding positions include 135 to 139 and I236; that span reads GVGGA. Y238 provides a ligand contact to shikimate. G260 is an NADP(+) binding site.

Belongs to the shikimate dehydrogenase family. Homodimer.

The catalysed reaction is shikimate + NADP(+) = 3-dehydroshikimate + NADPH + H(+). Its pathway is metabolic intermediate biosynthesis; chorismate biosynthesis; chorismate from D-erythrose 4-phosphate and phosphoenolpyruvate: step 4/7. Functionally, involved in the biosynthesis of the chorismate, which leads to the biosynthesis of aromatic amino acids. Catalyzes the reversible NADPH linked reduction of 3-dehydroshikimate (DHSA) to yield shikimate (SA). This is Shikimate dehydrogenase (NADP(+)) from Streptococcus pyogenes serotype M3 (strain ATCC BAA-595 / MGAS315).